The primary structure comprises 83 residues: UPF0297 protein DSY2420 (83 aa).

The protein belongs to the UPF0297 family.

This chain is UPF0297 protein DSY2420, found in Desulfitobacterium hafniense (strain Y51).